The sequence spans 394 residues: Proliferation-associated protein 2G4 (394 aa).

The residue at position 2 (S2) is an N-acetylserine. S2 bears the Phosphoserine mark. Positions 2-48 (SGEDEQQEQTIAEDLVVTKYKMGGDIANRVLRSLVEASSSGVSVLSL) are necessary for nucleolar localization. Positions 46–54 (LSLCEKGDA) are RNA-binding. K298 participates in a covalent cross-link: Glycyl lysine isopeptide (Lys-Gly) (interchain with G-Cter in SUMO2). A necessary for nucleolar localization region spans residues 301-394 (LLQPFNVLYE…ETLEENGAGD (94 aa)). A Phosphoserine modification is found at S335. Residues 358–394 (LQSSASRKTQKKKKKKASKTAENATSGETLEENGAGD) are disordered. S361 carries the post-translational modification Phosphoserine; by PKC/PRKCD. The segment at 361-375 (SASRKTQKKKKKKAS) is interaction with RNA. Residues 365–375 (KTQKKKKKKAS) are compositionally biased toward basic residues. T366 and T386 each carry phosphothreonine.

The protein belongs to the peptidase M24 family. In terms of assembly, isoform 2 interacts with the cytoplasmic domain of non-phosphorylated ERBB3; the interaction requires PKC activity. Interacts with AR. Treatment with HRG leads to dissociation from ERBB3 and increases association with AR. Interacts with nucleolin/NCL. Component of a ribonucleoprotein complex containing at least PA2G4, NCL, TOP1, PABPC2, RPLP0, acetylated histone H1 (HIST1H1A or H1F1), histone H1 2/4, RPL4, RPL8, RPL15, RPL18, RPL18A, RPL21, RPL11, RPL12, RPL28, RPL27, RPLP2 and RPL24. Interacts with HDAC2. Interacts with RB1; the interaction is enhanced upon PA2G4 dephosphorylation. Isoform 1 and isoform 2 interact with RNF20. Isoform 2 interacts with HUWE1. Interacts with AKT1. Interacts with DNAJC21. Phosphorylated on serine and threonine residues. Phosphorylation is enhanced by HRG treatment. Basal phosphorylation is PKC-dependent and HRG-induced phosphorylation is predominantly PKC-independent. Phosphorylation at Ser-361 by PKC/PRKCD regulates its nucleolar localization. Post-translationally, isoform 2 is polyubiquitinated, leading to proteasomal degradation and phosphorylation by PKC/PRKCD enhances polyubiquitination.

The protein resides in the cytoplasm. Its subcellular location is the nucleus. The protein localises to the nucleolus. Functionally, may play a role in a ERBB3-regulated signal transduction pathway. Seems be involved in growth regulation. Acts a corepressor of the androgen receptor (AR) and is regulated by the ERBB3 ligand neuregulin-1/heregulin (HRG). Inhibits transcription of some E2F1-regulated promoters, probably by recruiting histone acetylase (HAT) activity. Binds RNA. Associates with 28S, 18S and 5.8S mature rRNAs, several rRNA precursors and probably U3 small nucleolar RNA. May be involved in regulation of intermediate and late steps of rRNA processing. May be involved in ribosome assembly. Mediates cap-independent translation of specific viral IRESs (internal ribosomal entry site). Together with PTBP1 is required for the translation initiation on the foot-and-mouth disease virus (FMDV) IRES. Regulates cell proliferation, differentiation, and survival. Isoform 1 suppresses apoptosis whereas isoform 2 promotes cell differentiation. This is Proliferation-associated protein 2G4 (Pa2g4) from Rattus norvegicus (Rat).